Reading from the N-terminus, the 267-residue chain is Phosphatidylserine decarboxylase proenzyme (267 aa).

Residues aspartate 78, histidine 132, and serine 236 each act as charge relay system; for autoendoproteolytic cleavage activity in the active site. The Schiff-base intermediate with substrate; via pyruvic acid; for decarboxylase activity role is filled by serine 236. At serine 236 the chain carries Pyruvic acid (Ser); by autocatalysis.

This sequence belongs to the phosphatidylserine decarboxylase family. PSD-B subfamily. Prokaryotic type I sub-subfamily. In terms of assembly, heterodimer of a large membrane-associated beta subunit and a small pyruvoyl-containing alpha subunit. It depends on pyruvate as a cofactor. In terms of processing, is synthesized initially as an inactive proenzyme. Formation of the active enzyme involves a self-maturation process in which the active site pyruvoyl group is generated from an internal serine residue via an autocatalytic post-translational modification. Two non-identical subunits are generated from the proenzyme in this reaction, and the pyruvate is formed at the N-terminus of the alpha chain, which is derived from the carboxyl end of the proenzyme. The autoendoproteolytic cleavage occurs by a canonical serine protease mechanism, in which the side chain hydroxyl group of the serine supplies its oxygen atom to form the C-terminus of the beta chain, while the remainder of the serine residue undergoes an oxidative deamination to produce ammonia and the pyruvoyl prosthetic group on the alpha chain. During this reaction, the Ser that is part of the protease active site of the proenzyme becomes the pyruvoyl prosthetic group, which constitutes an essential element of the active site of the mature decarboxylase.

The protein localises to the cell membrane. The enzyme catalyses a 1,2-diacyl-sn-glycero-3-phospho-L-serine + H(+) = a 1,2-diacyl-sn-glycero-3-phosphoethanolamine + CO2. Its pathway is phospholipid metabolism; phosphatidylethanolamine biosynthesis; phosphatidylethanolamine from CDP-diacylglycerol: step 2/2. Catalyzes the formation of phosphatidylethanolamine (PtdEtn) from phosphatidylserine (PtdSer). The chain is Phosphatidylserine decarboxylase proenzyme from Helicobacter pylori (strain ATCC 700392 / 26695) (Campylobacter pylori).